A 732-amino-acid chain; its full sequence is uncharacterized protein (732 aa).

A TR mART core domain is found at 163-390 (YYTINELNYL…FGIVAKKKYE (228 aa)). Active-site residues include arginine 285, serine 309, and glutamate 354.

This is an uncharacterized protein from Acanthamoeba polyphaga mimivirus (APMV).